Consider the following 413-residue polypeptide: Multifunctional CCA protein (413 aa).

2 residues coordinate ATP: Gly8 and Arg11. Residues Gly8 and Arg11 each contribute to the CTP site. Mg(2+) contacts are provided by Asp21 and Asp23. 3 residues coordinate ATP: Arg91, Arg143, and Arg146. Residues Arg91, Arg143, and Arg146 each contribute to the CTP site. The HD domain occupies 232–333 (TGVHVMMVVD…VRLFERSDAL (102 aa)).

The protein belongs to the tRNA nucleotidyltransferase/poly(A) polymerase family. Bacterial CCA-adding enzyme type 1 subfamily. As to quaternary structure, monomer. Can also form homodimers and oligomers. Requires Mg(2+) as cofactor. Ni(2+) is required as a cofactor.

The catalysed reaction is a tRNA precursor + 2 CTP + ATP = a tRNA with a 3' CCA end + 3 diphosphate. It carries out the reaction a tRNA with a 3' CCA end + 2 CTP + ATP = a tRNA with a 3' CCACCA end + 3 diphosphate. Functionally, catalyzes the addition and repair of the essential 3'-terminal CCA sequence in tRNAs without using a nucleic acid template. Adds these three nucleotides in the order of C, C, and A to the tRNA nucleotide-73, using CTP and ATP as substrates and producing inorganic pyrophosphate. tRNA 3'-terminal CCA addition is required both for tRNA processing and repair. Also involved in tRNA surveillance by mediating tandem CCA addition to generate a CCACCA at the 3' terminus of unstable tRNAs. While stable tRNAs receive only 3'-terminal CCA, unstable tRNAs are marked with CCACCA and rapidly degraded. In Burkholderia vietnamiensis (strain G4 / LMG 22486) (Burkholderia cepacia (strain R1808)), this protein is Multifunctional CCA protein.